Here is a 232-residue protein sequence, read N- to C-terminus: Ubiquinone biosynthesis O-methyltransferase (232 aa).

S-adenosyl-L-methionine-binding residues include Arg36, Gly55, Asp76, and Met120.

The protein belongs to the methyltransferase superfamily. UbiG/COQ3 family.

The enzyme catalyses a 3-demethylubiquinol + S-adenosyl-L-methionine = a ubiquinol + S-adenosyl-L-homocysteine + H(+). The catalysed reaction is a 3-(all-trans-polyprenyl)benzene-1,2-diol + S-adenosyl-L-methionine = a 2-methoxy-6-(all-trans-polyprenyl)phenol + S-adenosyl-L-homocysteine + H(+). It functions in the pathway cofactor biosynthesis; ubiquinone biosynthesis. In terms of biological role, O-methyltransferase that catalyzes the 2 O-methylation steps in the ubiquinone biosynthetic pathway. This is Ubiquinone biosynthesis O-methyltransferase from Burkholderia mallei (strain ATCC 23344).